Reading from the N-terminus, the 142-residue chain is MLSPKKTKYRKQFKGRIHGTAKGGFTLNFGSYGLKSMEPERITARQIEAARRAITRQMKRQGRVWIRVFPDVPVTGKPAEVRMGSGKGSVEYWAARVHPGRIMFEIDGVPDDVAREALRLGAAKLPVKTRIVTRIDAAVEHA.

This sequence belongs to the universal ribosomal protein uL16 family. In terms of assembly, part of the 50S ribosomal subunit.

In terms of biological role, binds 23S rRNA and is also seen to make contacts with the A and possibly P site tRNAs. The protein is Large ribosomal subunit protein uL16 of Phenylobacterium zucineum (strain HLK1).